Reading from the N-terminus, the 495-residue chain is MTDRNLRELLAPWVPNAPGRVLREMTLDSRTAAAGDLFVAVAGHQTDGRRYIPQAIAQGVAAVVAQAEGEAEEGEIRELHGVPVIYLHRLQERLSALAGRFYQQPLHALRLTGVTGTNGKTTTTHLLAQWAQLLGETSAVMGTVGNGVLGHIHPADNTTGSPIEVQQLLLQLQRQGATFAAMEVSSHGLVQHRVSILHFAAAVFTNLSRDHLDYHGDMAQYEAAKWRLFGELDVGQRIINADDATGRRWLQKLPQAIAVAVSGTLPPERQGDWLCAGEVRYHARGADIPFRSSWGEGIVHCQLIGEFNVSNLLLALTTLLALGYPLPALLDSASRLQSICGRMEVFHAEDRPTVLVDYAHTPDALEKALTAARLHCHGKLWCVFGCGGDRDKGKRPLMGAIAEQYADRVIITDDNPRGEAAQDIINDIKSGLLDAGRAQVISGRAEAVTSAIMQAAPADLVLVAGKGHEDYQIIGKQRLDYSDRTTVARLLGVMA.

Residues leucine 27, serine 29, and 44 to 46 (HQT) contribute to the UDP-N-acetyl-alpha-D-muramoyl-L-alanyl-D-glutamate site. 116–122 (GTNGKTT) lines the ATP pocket. UDP-N-acetyl-alpha-D-muramoyl-L-alanyl-D-glutamate-binding positions include asparagine 157, 158–159 (TT), serine 185, glutamine 191, and arginine 193. An N6-carboxylysine modification is found at lysine 225. Meso-2,6-diaminopimelate-binding positions include arginine 390, 414–417 (DNPR), glycine 465, and glutamate 469. Residues 414–417 (DNPR) carry the Meso-diaminopimelate recognition motif motif.

Belongs to the MurCDEF family. MurE subfamily. Requires Mg(2+) as cofactor. Post-translationally, carboxylation is probably crucial for Mg(2+) binding and, consequently, for the gamma-phosphate positioning of ATP.

It is found in the cytoplasm. The enzyme catalyses UDP-N-acetyl-alpha-D-muramoyl-L-alanyl-D-glutamate + meso-2,6-diaminopimelate + ATP = UDP-N-acetyl-alpha-D-muramoyl-L-alanyl-gamma-D-glutamyl-meso-2,6-diaminopimelate + ADP + phosphate + H(+). Its pathway is cell wall biogenesis; peptidoglycan biosynthesis. In terms of biological role, catalyzes the addition of meso-diaminopimelic acid to the nucleotide precursor UDP-N-acetylmuramoyl-L-alanyl-D-glutamate (UMAG) in the biosynthesis of bacterial cell-wall peptidoglycan. The polypeptide is UDP-N-acetylmuramoyl-L-alanyl-D-glutamate--2,6-diaminopimelate ligase (Sodalis glossinidius (strain morsitans)).